The sequence spans 363 residues: Small ribosomal subunit biogenesis GTPase RsgA (363 aa).

The CP-type G domain maps to 112–268 (HQQVIAANID…LIDTPGMREL (157 aa)). GTP is bound by residues 157–160 (TKAD) and 210–218 (GSSGAGKST). Zn(2+) is bound by residues Cys-291, Cys-296, His-298, and Cys-304. The segment at 340 to 363 (RVAQNNRGKGSGKRPASVDRPGRH) is disordered.

It belongs to the TRAFAC class YlqF/YawG GTPase family. RsgA subfamily. As to quaternary structure, monomer. Associates with 30S ribosomal subunit, binds 16S rRNA. Zn(2+) is required as a cofactor.

The protein localises to the cytoplasm. In terms of biological role, one of several proteins that assist in the late maturation steps of the functional core of the 30S ribosomal subunit. Helps release RbfA from mature subunits. May play a role in the assembly of ribosomal proteins into the subunit. Circularly permuted GTPase that catalyzes slow GTP hydrolysis, GTPase activity is stimulated by the 30S ribosomal subunit. This is Small ribosomal subunit biogenesis GTPase RsgA from Xanthomonas axonopodis pv. citri (strain 306).